Reading from the N-terminus, the 31-residue chain is Cyclotide cter-E (31 aa).

The segment at residues 1-31 is a cross-link (cyclopeptide (Gly-Asp)); it reads GIPCAESCVWIPCTVTALLGCSCKDKVCYLD. Disulfide bonds link Cys-4–Cys-21, Cys-8–Cys-23, and Cys-13–Cys-28.

Post-translationally, contains 3 disulfide bonds. In terms of processing, this is a cyclic peptide.

Probably participates in a plant defense mechanism. The protein is Cyclotide cter-E of Clitoria ternatea (Butterfly pea).